The chain runs to 229 residues: Protein rep (229 aa).

Position 214 (Tyr-214) interacts with DNA.

Belongs to the Gram-positive plasmids replication protein type 1 family.

Its function is as follows. Produces a single-strand nick in a specific site of the plasmid, and this nick results in single-strand replication by rolling circle mechanism. This is Protein rep from Staphylococcus aureus.